Reading from the N-terminus, the 316-residue chain is Acetyl-coenzyme A carboxylase carboxyl transferase subunit alpha (316 aa).

Positions 36–290 (PLRTQLETLR…GSVISRHLDD (255 aa)) constitute a CoA carboxyltransferase C-terminal domain.

The protein belongs to the AccA family. Acetyl-CoA carboxylase is a heterohexamer composed of biotin carboxyl carrier protein (AccB), biotin carboxylase (AccC) and two subunits each of ACCase subunit alpha (AccA) and ACCase subunit beta (AccD).

It localises to the cytoplasm. The enzyme catalyses N(6)-carboxybiotinyl-L-lysyl-[protein] + acetyl-CoA = N(6)-biotinyl-L-lysyl-[protein] + malonyl-CoA. It participates in lipid metabolism; malonyl-CoA biosynthesis; malonyl-CoA from acetyl-CoA: step 1/1. In terms of biological role, component of the acetyl coenzyme A carboxylase (ACC) complex. First, biotin carboxylase catalyzes the carboxylation of biotin on its carrier protein (BCCP) and then the CO(2) group is transferred by the carboxyltransferase to acetyl-CoA to form malonyl-CoA. The sequence is that of Acetyl-coenzyme A carboxylase carboxyl transferase subunit alpha from Deinococcus radiodurans (strain ATCC 13939 / DSM 20539 / JCM 16871 / CCUG 27074 / LMG 4051 / NBRC 15346 / NCIMB 9279 / VKM B-1422 / R1).